We begin with the raw amino-acid sequence, 84 residues long: Cell division topological specificity factor (84 aa).

The protein belongs to the MinE family.

Functionally, prevents the cell division inhibition by proteins MinC and MinD at internal division sites while permitting inhibition at polar sites. This ensures cell division at the proper site by restricting the formation of a division septum at the midpoint of the long axis of the cell. The protein is Cell division topological specificity factor of Burkholderia cenocepacia (strain ATCC BAA-245 / DSM 16553 / LMG 16656 / NCTC 13227 / J2315 / CF5610) (Burkholderia cepacia (strain J2315)).